Consider the following 219-residue polypeptide: Translation initiation factor IF-3 (219 aa).

Belongs to the IF-3 family. In terms of assembly, monomer.

The protein resides in the cytoplasm. Its function is as follows. IF-3 binds to the 30S ribosomal subunit and shifts the equilibrium between 70S ribosomes and their 50S and 30S subunits in favor of the free subunits, thus enhancing the availability of 30S subunits on which protein synthesis initiation begins. The sequence is that of Translation initiation factor IF-3 from Prochlorococcus marinus (strain MIT 9313).